The following is a 216-amino-acid chain: uncharacterized protein (216 aa).

Helical transmembrane passes span 5 to 27 (ISLI…IAFS), 98 to 120 (FLSF…VFLL), 125 to 147 (VLIW…TFTN), and 185 to 207 (GTLF…GILG).

The protein localises to the cell membrane. This is an uncharacterized protein from Aquifex aeolicus (strain VF5).